Here is a 266-residue protein sequence, read N- to C-terminus: DNA-directed RNA polymerase subunit Rpo3 (266 aa).

[3Fe-4S] cluster-binding residues include C205, C208, and C211.

This sequence belongs to the archaeal Rpo3/eukaryotic RPB3 RNA polymerase subunit family. In terms of assembly, part of the RNA polymerase complex. The cofactor is [3Fe-4S] cluster.

Its subcellular location is the cytoplasm. The catalysed reaction is RNA(n) + a ribonucleoside 5'-triphosphate = RNA(n+1) + diphosphate. In terms of biological role, DNA-dependent RNA polymerase (RNAP) catalyzes the transcription of DNA into RNA using the four ribonucleoside triphosphates as substrates. The sequence is that of DNA-directed RNA polymerase subunit Rpo3 from Methanosarcina mazei (strain ATCC BAA-159 / DSM 3647 / Goe1 / Go1 / JCM 11833 / OCM 88) (Methanosarcina frisia).